Consider the following 184-residue polypeptide: GTP cyclohydrolase 1 (184 aa).

Residues Cys75, His78, and Cys146 each contribute to the Zn(2+) site.

Belongs to the GTP cyclohydrolase I family. Homomer.

It carries out the reaction GTP + H2O = 7,8-dihydroneopterin 3'-triphosphate + formate + H(+). It functions in the pathway cofactor biosynthesis; 7,8-dihydroneopterin triphosphate biosynthesis; 7,8-dihydroneopterin triphosphate from GTP: step 1/1. The sequence is that of GTP cyclohydrolase 1 from Streptococcus pneumoniae (strain ATCC 700669 / Spain 23F-1).